We begin with the raw amino-acid sequence, 350 residues long: Cytosolic sulfotransferase 18 (350 aa).

An N-acetylmethionine modification is found at M1. Residues 1 to 17 show a composition bias toward low complexity; that stretch reads MESETLTAKATITTTTL. Residues 1-28 form a disordered region; the sequence is MESETLTAKATITTTTLPSHDETKTEST. Positions 19–28 are enriched in basic and acidic residues; the sequence is SHDETKTEST. 93–98 is a 3'-phosphoadenylyl sulfate binding site; it reads KTGTTW. H155 acts as the Proton acceptor in catalysis. Residues R177, S185, Y243, and 313–315 each bind 3'-phosphoadenylyl sulfate; that span reads RKG.

The protein belongs to the sulfotransferase 1 family. In terms of tissue distribution, expressed in roots, leaves and stems. Barely detected in siliques and flowers.

It localises to the cytoplasm. It carries out the reaction an aliphatic (Z)-desulfo-glucosinolate + 3'-phosphoadenylyl sulfate = a (Z)-omega-(methylsulfanyl)-N-sulfo-alkylhydroximate S-glucoside + adenosine 3',5'-bisphosphate + H(+). Its activity is regulated as follows. Inhibited by phosphoadenosine 5'-phosphate (PAP). In terms of biological role, sulfotransferase that utilizes 3'-phospho-5'-adenylyl sulfate (PAPS) as sulfonate donor to catalyze the sulfate conjugation of desulfo-glucosinolates (dsGSs), the final step in the biosynthesis of the glucosinolate core structure. Preferred substrate are the long-chain desulfo-glucosinolates, 7-methylthioheptyl and 8-methylthiooctyl, derived from methionine. Substrate preference is desulfo-benzyl glucosinolate &gt; desulfo-4-methylthiobutyl glucosinolate &gt; desulfo-6-methylthiohexyl glucosinolate &gt; desulfo-3-methylthiopropyl glucosinolate &gt; desulfo-indol-3-yl methyl glucosinolate &gt; desulfo-singrin &gt; desulfo-3-butenyl glucosinolate. This chain is Cytosolic sulfotransferase 18 (SOT18), found in Arabidopsis thaliana (Mouse-ear cress).